A 252-amino-acid polypeptide reads, in one-letter code: MKILVSNDDGVLAPGIKILANELSTLGEVKVVAPDRNRSGASNSLTLTQPLRVKQLDNGYYSVDGTPTDCVHLALTGFLEPIADIVVSGINEGANLGDDVLYSGTVAAAMEGRYLGLPAIAISMVGDNIQHYETAAIIAKQLVIKLSANKLPSQTILNVNVPDLPLNQIRGMQVTRLGTRHSAEPIIKEYDPRGRPIYWVGPPGIEADAGAGTDFFAIKTGHVSITPLHLDMTHYKLFDHLSNLLNEICIEN.

A divalent metal cation contacts are provided by aspartate 8, aspartate 9, serine 39, and asparagine 91.

The protein belongs to the SurE nucleotidase family. Requires a divalent metal cation as cofactor.

It localises to the cytoplasm. The catalysed reaction is a ribonucleoside 5'-phosphate + H2O = a ribonucleoside + phosphate. Functionally, nucleotidase that shows phosphatase activity on nucleoside 5'-monophosphates. This is 5'-nucleotidase SurE from Legionella pneumophila (strain Corby).